A 335-amino-acid chain; its full sequence is Zinc-type alcohol dehydrogenase-like protein SAS2087 (335 aa).

It belongs to the zinc-containing alcohol dehydrogenase family. Quinone oxidoreductase subfamily.

This is Zinc-type alcohol dehydrogenase-like protein SAS2087 from Staphylococcus aureus (strain MSSA476).